A 421-amino-acid chain; its full sequence is Fumarylacetoacetase (421 aa).

Asp-131 is a Ca(2+) binding site. Catalysis depends on His-138, which acts as the Proton acceptor. A substrate-binding site is contributed by Arg-147. Positions 204, 206, and 238 each coordinate Ca(2+). Mg(2+) is bound at residue Asp-238. 2 residues coordinate substrate: Gln-245 and Tyr-249. Residues Lys-258 and Thr-262 each contribute to the Mg(2+) site. Residue Thr-355 coordinates substrate.

The protein belongs to the FAH family. Requires Ca(2+) as cofactor. Mg(2+) serves as cofactor.

The catalysed reaction is 4-fumarylacetoacetate + H2O = acetoacetate + fumarate + H(+). It functions in the pathway amino-acid degradation; L-phenylalanine degradation; acetoacetate and fumarate from L-phenylalanine: step 6/6. Functionally, converts fumarylacetoacetate to acetoacetate and fumarate. Involved in tyrosine catabolic pathway. Catalyzes the final step in the tyrosine degradation pathway. The polypeptide is Fumarylacetoacetase (Arabidopsis thaliana (Mouse-ear cress)).